Here is a 188-residue protein sequence, read N- to C-terminus: Probable RNA 2'-phosphotransferase (188 aa).

This sequence belongs to the KptA/TPT1 family.

Removes the 2'-phosphate from RNA via an intermediate in which the phosphate is ADP-ribosylated by NAD followed by a presumed transesterification to release the RNA and generate ADP-ribose 1''-2''-cyclic phosphate (APPR&gt;P). May function as an ADP-ribosylase. The protein is Probable RNA 2'-phosphotransferase of Lacticaseibacillus paracasei (strain ATCC 334 / BCRC 17002 / CCUG 31169 / CIP 107868 / KCTC 3260 / NRRL B-441) (Lactobacillus paracasei).